The chain runs to 570 residues: Formate--tetrahydrofolate ligase (570 aa).

ATP is bound at residue 65-72; sequence TPHGEGKT.

The protein belongs to the formate--tetrahydrofolate ligase family.

The enzyme catalyses (6S)-5,6,7,8-tetrahydrofolate + formate + ATP = (6R)-10-formyltetrahydrofolate + ADP + phosphate. Its pathway is one-carbon metabolism; tetrahydrofolate interconversion. In Shewanella sp. (strain ANA-3), this protein is Formate--tetrahydrofolate ligase.